Reading from the N-terminus, the 119-residue chain is Flagellar transcriptional regulator FlhD (119 aa).

It belongs to the FlhD family. As to quaternary structure, homodimer; disulfide-linked. Forms a heterohexamer composed of two FlhC and four FlhD subunits. Each FlhC binds a FlhD dimer, forming a heterotrimer, and a hexamer assembles by dimerization of two heterotrimers.

The protein resides in the cytoplasm. Its function is as follows. Functions in complex with FlhC as a master transcriptional regulator that regulates transcription of several flagellar and non-flagellar operons by binding to their promoter region. Activates expression of class 2 flagellar genes, including fliA, which is a flagellum-specific sigma factor that turns on the class 3 genes. Also regulates genes whose products function in a variety of physiological pathways. The chain is Flagellar transcriptional regulator FlhD from Serratia marcescens.